The chain runs to 140 residues: MLKTISPLISPELLKVLAEMGHGDEIIFSDAHFPAHSMGPQVIRADGLLVSDLLQAIIPLFELDSYAPPLVMMAAVEGDTLDPEVERRYRNALSLQAPCPDIIRINRFAFYERAQKAFAIVITGERAKYGNILLKKGVTP.

Residue His22 is the Proton donor of the active site. Substrate contacts are provided by residues Asp30, Arg107, and 129–131 (YGN).

It belongs to the RbsD / FucU family. FucU mutarotase subfamily. In terms of assembly, homodecamer.

It localises to the cytoplasm. It carries out the reaction alpha-L-fucose = beta-L-fucose. It functions in the pathway carbohydrate metabolism; L-fucose metabolism. Its function is as follows. Involved in the anomeric conversion of L-fucose. The polypeptide is L-fucose mutarotase (Shigella boydii serotype 18 (strain CDC 3083-94 / BS512)).